Here is a 166-residue protein sequence, read N- to C-terminus: Regulator of ribonuclease activity A (166 aa).

The protein belongs to the RraA family. In terms of assembly, homotrimer. Binds to both RNA-binding sites in the C-terminal region of Rne and to RhlB.

The protein localises to the cytoplasm. In terms of biological role, globally modulates RNA abundance by binding to RNase E (Rne) and regulating its endonucleolytic activity. Can modulate Rne action in a substrate-dependent manner by altering the composition of the degradosome. Modulates RNA-binding and helicase activities of the degradosome. This Pasteurella multocida (strain Pm70) protein is Regulator of ribonuclease activity A.